A 387-amino-acid polypeptide reads, in one-letter code: 3-ketoacyl-CoA thiolase (387 aa).

The active-site Acyl-thioester intermediate is the C91. Residues H343 and C373 each act as proton acceptor in the active site.

This sequence belongs to the thiolase-like superfamily. Thiolase family. As to quaternary structure, heterotetramer of two alpha chains (FadB) and two beta chains (FadA).

The protein localises to the cytoplasm. The catalysed reaction is an acyl-CoA + acetyl-CoA = a 3-oxoacyl-CoA + CoA. It functions in the pathway lipid metabolism; fatty acid beta-oxidation. Functionally, catalyzes the final step of fatty acid oxidation in which acetyl-CoA is released and the CoA ester of a fatty acid two carbons shorter is formed. In Shigella dysenteriae serotype 1 (strain Sd197), this protein is 3-ketoacyl-CoA thiolase.